A 467-amino-acid chain; its full sequence is MADDTTDTKSSNQMWGGRFASGPDAIMEEINASIGFDKKLFAQDIRGSIAHATMLAHQEIISAEDKDKIVHGLNTILSEIESGNFEFSRQLEDIHMNVEARLATLIGPAAGRLHTARSRNDQVALDFRLWVKEELQKTEQMLTGLIAAFLDRAEEHAESVMPGFTHLQTAQPVTFGHHCMAYVEMFGRDRSRVRHAIEHLDESPIGAAALAGTGYPIDRHMTAKALGFREPTRNSIDTVSDRDFAIEFLSIAAIAGMHLSRLAEEIVIWSTPQFGFVRLSDAFSTGSSIMPQKKNPDAAELVRAKTGRINGSLVALLTIMKGLPLAYSKDMQEDKEQVFDAAESLELAIAAMTGMVRDMTVNTARMKAAAGSGYSTATDLADWLVREAGLPFRDAHHVTGRAVALAESKGCDLAELPLSDLQAIHADITDKVYDVLTVEASVASRKSFGGTAPSEVRRQIAFWRARN.

It belongs to the lyase 1 family. Argininosuccinate lyase subfamily.

It is found in the cytoplasm. The enzyme catalyses 2-(N(omega)-L-arginino)succinate = fumarate + L-arginine. It functions in the pathway amino-acid biosynthesis; L-arginine biosynthesis; L-arginine from L-ornithine and carbamoyl phosphate: step 3/3. The protein is Argininosuccinate lyase of Rhizobium johnstonii (strain DSM 114642 / LMG 32736 / 3841) (Rhizobium leguminosarum bv. viciae).